A 110-amino-acid polypeptide reads, in one-letter code: RNA polymerase II transcriptional coactivator (110 aa).

A disordered region spans residues 1 to 50 (MPKTKKKDSSSDSDSGPDDRIKPASKKAKESDAPNSDPKDSGENGATSWT). Residues 17 to 42 (PDDRIKPASKKAKESDAPNSDPKDSG) show a composition bias toward basic and acidic residues.

It belongs to the transcriptional coactivator PC4 family.

It localises to the nucleus. Its function is as follows. General coactivator that functions cooperatively with TAFs and mediates functional interactions between upstream activators and the general transcriptional machinery. Binds single-stranded DNA. Binds specifically to the NssBF element, a short nucleotide sequence of the 1731 retrotransposon, to repress promoter activity. The chain is RNA polymerase II transcriptional coactivator (Ssb-c31a) from Drosophila melanogaster (Fruit fly).